A 314-amino-acid polypeptide reads, in one-letter code: MKIILANPRGFCAGVDRAISIVELALEIHGAPIYVRHEVVHNRFVVNGLRERGAVFVEELDEVPDGAIVIFSAHGVSQAVRQEAKRRNLKVFDATCPLVTKVHMQVARASRKGTKAILIGHEGHPEVQGTMGQYDNRDGGIFLVENVEDIAKLHLRDDDDLTFMTQTTLSIDDTADVIEALKQKYPNIQGPRKNDICYATTNRQQAVRDLAEQCDLVIVIGSKNSSNSNRLAELANRMGTPAKLLDDANDVDPAWLENVDIIGVTAGASAPEVLVQSVVSRLKELGVDTVEELTGCEENMFFEVPKELRINEAH.

Cys12 provides a ligand contact to [4Fe-4S] cluster. (2E)-4-hydroxy-3-methylbut-2-enyl diphosphate contacts are provided by His41 and His74. The dimethylallyl diphosphate site is built by His41 and His74. Isopentenyl diphosphate is bound by residues His41 and His74. Cys96 provides a ligand contact to [4Fe-4S] cluster. Residue His124 participates in (2E)-4-hydroxy-3-methylbut-2-enyl diphosphate binding. A dimethylallyl diphosphate-binding site is contributed by His124. His124 lines the isopentenyl diphosphate pocket. Glu126 functions as the Proton donor in the catalytic mechanism. Thr167 lines the (2E)-4-hydroxy-3-methylbut-2-enyl diphosphate pocket. A [4Fe-4S] cluster-binding site is contributed by Cys197. Residues Ser225, Ser226, Asn227, and Ser269 each coordinate (2E)-4-hydroxy-3-methylbut-2-enyl diphosphate. 4 residues coordinate dimethylallyl diphosphate: Ser225, Ser226, Asn227, and Ser269. The isopentenyl diphosphate site is built by Ser225, Ser226, Asn227, and Ser269.

It belongs to the IspH family. Requires [4Fe-4S] cluster as cofactor.

The catalysed reaction is isopentenyl diphosphate + 2 oxidized [2Fe-2S]-[ferredoxin] + H2O = (2E)-4-hydroxy-3-methylbut-2-enyl diphosphate + 2 reduced [2Fe-2S]-[ferredoxin] + 2 H(+). It catalyses the reaction dimethylallyl diphosphate + 2 oxidized [2Fe-2S]-[ferredoxin] + H2O = (2E)-4-hydroxy-3-methylbut-2-enyl diphosphate + 2 reduced [2Fe-2S]-[ferredoxin] + 2 H(+). It functions in the pathway isoprenoid biosynthesis; dimethylallyl diphosphate biosynthesis; dimethylallyl diphosphate from (2E)-4-hydroxy-3-methylbutenyl diphosphate: step 1/1. Its pathway is isoprenoid biosynthesis; isopentenyl diphosphate biosynthesis via DXP pathway; isopentenyl diphosphate from 1-deoxy-D-xylulose 5-phosphate: step 6/6. Catalyzes the conversion of 1-hydroxy-2-methyl-2-(E)-butenyl 4-diphosphate (HMBPP) into a mixture of isopentenyl diphosphate (IPP) and dimethylallyl diphosphate (DMAPP). Acts in the terminal step of the DOXP/MEP pathway for isoprenoid precursor biosynthesis. This is 4-hydroxy-3-methylbut-2-enyl diphosphate reductase from Actinobacillus succinogenes (strain ATCC 55618 / DSM 22257 / CCUG 43843 / 130Z).